The sequence spans 300 residues: 33 kDa chaperonin (300 aa).

2 disulfides stabilise this stretch: cysteine 240–cysteine 242 and cysteine 273–cysteine 276.

The protein belongs to the HSP33 family. In terms of processing, under oxidizing conditions two disulfide bonds are formed involving the reactive cysteines. Under reducing conditions zinc is bound to the reactive cysteines and the protein is inactive.

The protein localises to the cytoplasm. Redox regulated molecular chaperone. Protects both thermally unfolding and oxidatively damaged proteins from irreversible aggregation. Plays an important role in the bacterial defense system toward oxidative stress. This is 33 kDa chaperonin from Cyanothece sp. (strain PCC 7425 / ATCC 29141).